The sequence spans 513 residues: Varicidin biosynthesis cluster-specific transcription factor (513 aa).

The zn(2)-C6 fungal-type DNA-binding region spans 16 to 54; it reads CERCRLHKLKCTILPQKRFEGPQEAPEQCTRCARAKAKC. 2 disordered regions span residues 58–92 and 97–116; these read RRAP…MQPN and VSSH…SSLK. Low complexity predominate over residues 67–76; sequence SSSNDRSSVS. Residues 77 to 92 show a composition bias toward polar residues; it reads KGINSTTPATRTMQPN.

The protein resides in the nucleus. Transcription factor that regulates the expression of the gene cluster that mediates the biosynthesis of varicidin A, an antifungal natural product containing a cis-octahydrodecalin core. This is Varicidin biosynthesis cluster-specific transcription factor from Talaromyces variabilis (Penicillium variabile).